The primary structure comprises 186 residues: Ribosome maturation factor RimM (186 aa).

The 83-residue stretch at 100-182 folds into the PRC barrel domain; it reads NEGEYHVSDL…RIEINPPVGL (83 aa).

This sequence belongs to the RimM family. As to quaternary structure, binds ribosomal protein uS19.

It localises to the cytoplasm. In terms of biological role, an accessory protein needed during the final step in the assembly of 30S ribosomal subunit, possibly for assembly of the head region. Essential for efficient processing of 16S rRNA. May be needed both before and after RbfA during the maturation of 16S rRNA. It has affinity for free ribosomal 30S subunits but not for 70S ribosomes. The sequence is that of Ribosome maturation factor RimM from Rippkaea orientalis (strain PCC 8801 / RF-1) (Cyanothece sp. (strain PCC 8801)).